The following is a 234-amino-acid chain: Small ribosomal subunit protein uS3 (234 aa).

Residues 39-109 form the KH type-2 domain; sequence IRTLINKHYG…EVRIAIYEVK (71 aa).

It belongs to the universal ribosomal protein uS3 family. As to quaternary structure, part of the 30S ribosomal subunit. Forms a tight complex with proteins S10 and S14.

Its function is as follows. Binds the lower part of the 30S subunit head. Binds mRNA in the 70S ribosome, positioning it for translation. This chain is Small ribosomal subunit protein uS3, found in Coprothermobacter proteolyticus (strain ATCC 35245 / DSM 5265 / OCM 4 / BT).